A 364-amino-acid chain; its full sequence is Alanine racemase (364 aa).

The Proton acceptor; specific for D-alanine role is filled by K35. Position 35 is an N6-(pyridoxal phosphate)lysine (K35). Position 131 (R131) interacts with substrate. Catalysis depends on Y256, which acts as the Proton acceptor; specific for L-alanine. M304 contributes to the substrate binding site.

This sequence belongs to the alanine racemase family. It depends on pyridoxal 5'-phosphate as a cofactor.

The enzyme catalyses L-alanine = D-alanine. The protein operates within amino-acid biosynthesis; D-alanine biosynthesis; D-alanine from L-alanine: step 1/1. Its function is as follows. Catalyzes the interconversion of L-alanine and D-alanine. May also act on other amino acids. This chain is Alanine racemase (alr), found in Chromohalobacter salexigens (strain ATCC BAA-138 / DSM 3043 / CIP 106854 / NCIMB 13768 / 1H11).